The primary structure comprises 202 residues: Phosphoenolpyruvate guanylyltransferase (202 aa).

Residues Thr-140, Gly-156, and Ser-159 each coordinate phosphoenolpyruvate.

The protein belongs to the CofC family.

It carries out the reaction phosphoenolpyruvate + GTP + H(+) = enolpyruvoyl-2-diphospho-5'-guanosine + diphosphate. Its pathway is cofactor biosynthesis; coenzyme F420 biosynthesis. Functionally, guanylyltransferase that catalyzes the activation of phosphoenolpyruvate (PEP) as enolpyruvoyl-2-diphospho-5'-guanosine, via the condensation of PEP with GTP. It is involved in the biosynthesis of coenzyme F420, a hydride carrier cofactor. In Chloroflexus aggregans (strain MD-66 / DSM 9485), this protein is Phosphoenolpyruvate guanylyltransferase.